The primary structure comprises 158 residues: Transcriptional repressor NrdR (158 aa).

The segment at C3–C34 is a zinc-finger region. In terms of domain architecture, ATP-cone spans I49–T139.

Belongs to the NrdR family. The cofactor is Zn(2+).

Functionally, negatively regulates transcription of bacterial ribonucleotide reductase nrd genes and operons by binding to NrdR-boxes. In Thermoanaerobacter pseudethanolicus (strain ATCC 33223 / 39E) (Clostridium thermohydrosulfuricum), this protein is Transcriptional repressor NrdR.